The sequence spans 848 residues: DNA mismatch repair protein MutS (848 aa).

Gly605–Ser612 is a binding site for ATP.

It belongs to the DNA mismatch repair MutS family.

In terms of biological role, this protein is involved in the repair of mismatches in DNA. It is possible that it carries out the mismatch recognition step. This protein has a weak ATPase activity. In Leptospira borgpetersenii serovar Hardjo-bovis (strain JB197), this protein is DNA mismatch repair protein MutS.